Here is a 479-residue protein sequence, read N- to C-terminus: UDP-N-acetylmuramate--L-alanine ligase (479 aa).

128–134 (GAHGKTT) serves as a coordination point for ATP.

Belongs to the MurCDEF family.

The protein resides in the cytoplasm. The enzyme catalyses UDP-N-acetyl-alpha-D-muramate + L-alanine + ATP = UDP-N-acetyl-alpha-D-muramoyl-L-alanine + ADP + phosphate + H(+). The protein operates within cell wall biogenesis; peptidoglycan biosynthesis. Cell wall formation. The sequence is that of UDP-N-acetylmuramate--L-alanine ligase from Psychrobacter arcticus (strain DSM 17307 / VKM B-2377 / 273-4).